Consider the following 414-residue polypeptide: Peptide chain release factor subunit 1 (414 aa).

Belongs to the eukaryotic release factor 1 family. Heterodimer of two subunits, one of which binds GTP.

The protein resides in the cytoplasm. Directs the termination of nascent peptide synthesis (translation) in response to the termination codons UAA, UAG and UGA. The protein is Peptide chain release factor subunit 1 (prf1) of Pyrococcus abyssi (strain GE5 / Orsay).